The sequence spans 428 residues: Adenylosuccinate synthetase (428 aa).

Residues 12–18 (GDEGKGK) and 40–42 (GHT) each bind GTP. The active-site Proton acceptor is D13. Mg(2+) contacts are provided by D13 and G40. IMP-binding positions include 13–16 (DEGK), 38–41 (NAGH), T128, R142, Q223, T238, and R302. The Proton donor role is filled by H41. A substrate-binding site is contributed by 298 to 304 (TTTGRPR). Residues R304, 330 to 332 (KLD), and 412 to 414 (SVG) each bind GTP.

It belongs to the adenylosuccinate synthetase family. As to quaternary structure, homodimer. Mg(2+) is required as a cofactor.

The protein resides in the cytoplasm. The catalysed reaction is IMP + L-aspartate + GTP = N(6)-(1,2-dicarboxyethyl)-AMP + GDP + phosphate + 2 H(+). It functions in the pathway purine metabolism; AMP biosynthesis via de novo pathway; AMP from IMP: step 1/2. Functionally, plays an important role in the de novo pathway of purine nucleotide biosynthesis. Catalyzes the first committed step in the biosynthesis of AMP from IMP. This is Adenylosuccinate synthetase from Desulforamulus reducens (strain ATCC BAA-1160 / DSM 100696 / MI-1) (Desulfotomaculum reducens).